Reading from the N-terminus, the 297-residue chain is Phosphatidylserine decarboxylase proenzyme (297 aa).

Catalysis depends on charge relay system; for autoendoproteolytic cleavage activity residues aspartate 100, histidine 157, and serine 263. Serine 263 serves as the catalytic Schiff-base intermediate with substrate; via pyruvic acid; for decarboxylase activity. Serine 263 carries the pyruvic acid (Ser); by autocatalysis modification.

The protein belongs to the phosphatidylserine decarboxylase family. PSD-B subfamily. Prokaryotic type I sub-subfamily. In terms of assembly, heterodimer of a large membrane-associated beta subunit and a small pyruvoyl-containing alpha subunit. Pyruvate is required as a cofactor. Is synthesized initially as an inactive proenzyme. Formation of the active enzyme involves a self-maturation process in which the active site pyruvoyl group is generated from an internal serine residue via an autocatalytic post-translational modification. Two non-identical subunits are generated from the proenzyme in this reaction, and the pyruvate is formed at the N-terminus of the alpha chain, which is derived from the carboxyl end of the proenzyme. The autoendoproteolytic cleavage occurs by a canonical serine protease mechanism, in which the side chain hydroxyl group of the serine supplies its oxygen atom to form the C-terminus of the beta chain, while the remainder of the serine residue undergoes an oxidative deamination to produce ammonia and the pyruvoyl prosthetic group on the alpha chain. During this reaction, the Ser that is part of the protease active site of the proenzyme becomes the pyruvoyl prosthetic group, which constitutes an essential element of the active site of the mature decarboxylase.

The protein localises to the cell membrane. It carries out the reaction a 1,2-diacyl-sn-glycero-3-phospho-L-serine + H(+) = a 1,2-diacyl-sn-glycero-3-phosphoethanolamine + CO2. It functions in the pathway phospholipid metabolism; phosphatidylethanolamine biosynthesis; phosphatidylethanolamine from CDP-diacylglycerol: step 2/2. Functionally, catalyzes the formation of phosphatidylethanolamine (PtdEtn) from phosphatidylserine (PtdSer). This is Phosphatidylserine decarboxylase proenzyme from Actinobacillus pleuropneumoniae serotype 5b (strain L20).